The sequence spans 246 residues: Probable chemoreceptor glutamine deamidase CheD (246 aa).

The disordered stretch occupies residues 225–246 (GAGVQPAVQKAASPYAANLSRK).

Belongs to the CheD family.

The catalysed reaction is L-glutaminyl-[protein] + H2O = L-glutamyl-[protein] + NH4(+). Its function is as follows. Probably deamidates glutamine residues to glutamate on methyl-accepting chemotaxis receptors (MCPs), playing an important role in chemotaxis. The chain is Probable chemoreceptor glutamine deamidase CheD from Burkholderia vietnamiensis (strain G4 / LMG 22486) (Burkholderia cepacia (strain R1808)).